Here is a 337-residue protein sequence, read N- to C-terminus: ATP-dependent 6-phosphofructokinase (337 aa).

ATP is bound at residue G11. 21–25 is an ADP binding site; the sequence is RAVVR. Residues 72 to 73 and 102 to 105 each bind ATP; these read RY and GDGS. Mg(2+) is bound at residue D103. 125–127 is a binding site for substrate; it reads TID. D127 (proton acceptor) is an active-site residue. R154 is an ADP binding site. Residues R162 and 169–171 contribute to the substrate site; that span reads MGR. ADP contacts are provided by residues 185-187, R212, and 214-216; these read GAD and KNH. Residues E223, R245, and 251 to 254 contribute to the substrate site; that span reads HILR.

It belongs to the phosphofructokinase type A (PFKA) family. ATP-dependent PFK group I subfamily. Prokaryotic clade 'B1' sub-subfamily. As to quaternary structure, homotetramer. It depends on Mg(2+) as a cofactor.

Its subcellular location is the cytoplasm. The catalysed reaction is beta-D-fructose 6-phosphate + ATP = beta-D-fructose 1,6-bisphosphate + ADP + H(+). It functions in the pathway carbohydrate degradation; glycolysis; D-glyceraldehyde 3-phosphate and glycerone phosphate from D-glucose: step 3/4. Allosterically activated by ADP and other diphosphonucleosides, and allosterically inhibited by phosphoenolpyruvate. In terms of biological role, catalyzes the phosphorylation of D-fructose 6-phosphate to fructose 1,6-bisphosphate by ATP, the first committing step of glycolysis. The chain is ATP-dependent 6-phosphofructokinase from Streptococcus equi subsp. zooepidemicus (strain H70).